Reading from the N-terminus, the 103-residue chain is Small ribosomal subunit protein uS10 (103 aa).

The protein belongs to the universal ribosomal protein uS10 family. In terms of assembly, part of the 30S ribosomal subunit.

Functionally, involved in the binding of tRNA to the ribosomes. In Fusobacterium nucleatum subsp. nucleatum (strain ATCC 25586 / DSM 15643 / BCRC 10681 / CIP 101130 / JCM 8532 / KCTC 2640 / LMG 13131 / VPI 4355), this protein is Small ribosomal subunit protein uS10.